The chain runs to 165 residues: Pro-MCH (165 aa).

The first 21 residues, 1-21 (MAKMNLSSYILILTFSLFSQG), serve as a signal peptide directing secretion. Position 143 is an isoleucine amide (Ile-143). Residues Cys-153 and Cys-162 are joined by a disulfide bond.

It belongs to the melanin-concentrating hormone family. Post-translationally, differentially processed in the brain and in peripheral organs producing two neuropeptides; NEI and MCH. A third peptide, NGE, may also be produced. Preferential processing in neurons by prohormone convertase 2 (PC2) generates NEI. MCH is generated in neurons of the lateral hypothalmic area by several prohormone convertases including PC1/3, PC2 and PC5/6. Predominantly expressed in lateral hypothalamus, also detected in pallidum, neocortex and cerebellum. Also found in thymus, brown adipose tissue, duodenum and testis (spermatogonia, early spermatocytes and Sertoli cells). No expression in peripheral blood. In brain exclusively mature MCH and NEI peptides are present. In peripheral tissues a large product, encompassing the NEI and MCH domains of the precursor, is found predominantly.

Its subcellular location is the secreted. Functionally, MCH may act as a neurotransmitter or neuromodulator in a broad array of neuronal functions directed toward the regulation of goal-directed behavior, such as food intake, and general arousal. May also have a role in spermatocyte differentiation. The chain is Pro-MCH (PMCH) from Homo sapiens (Human).